Consider the following 234-residue polypeptide: Small ribosomal subunit protein uS3 (234 aa).

In terms of domain architecture, KH type-2 spans 39–108 (IRKFVKKKLF…TVIVNVVEVK (70 aa)). The tract at residues 212 to 234 (KGKNEETNNETADNSRGRRREAK) is disordered.

This sequence belongs to the universal ribosomal protein uS3 family. In terms of assembly, part of the 30S ribosomal subunit. Forms a tight complex with proteins S10 and S14.

In terms of biological role, binds the lower part of the 30S subunit head. Binds mRNA in the 70S ribosome, positioning it for translation. The protein is Small ribosomal subunit protein uS3 of Alkaliphilus metalliredigens (strain QYMF).